A 236-amino-acid polypeptide reads, in one-letter code: Small ribosomal subunit protein uS2c (236 aa).

This sequence belongs to the universal ribosomal protein uS2 family.

It is found in the plastid. It localises to the chloroplast. This Pisum sativum (Garden pea) protein is Small ribosomal subunit protein uS2c (rps2).